The following is a 193-amino-acid chain: Xanthine phosphoribosyltransferase (193 aa).

Xanthine-binding residues include L20 and T27. 5-phospho-alpha-D-ribose 1-diphosphate is bound at residue 128-132; sequence ANGQA. A xanthine-binding site is contributed by K156.

Belongs to the purine/pyrimidine phosphoribosyltransferase family. Xpt subfamily. Homodimer.

It localises to the cytoplasm. It carries out the reaction XMP + diphosphate = xanthine + 5-phospho-alpha-D-ribose 1-diphosphate. Its pathway is purine metabolism; XMP biosynthesis via salvage pathway; XMP from xanthine: step 1/1. Functionally, converts the preformed base xanthine, a product of nucleic acid breakdown, to xanthosine 5'-monophosphate (XMP), so it can be reused for RNA or DNA synthesis. The chain is Xanthine phosphoribosyltransferase from Streptococcus equi subsp. zooepidemicus (strain H70).